The chain runs to 292 residues: Ribosomal protein L11 methyltransferase (292 aa).

Thr136, Gly159, Asp181, and Asn228 together coordinate S-adenosyl-L-methionine.

Belongs to the methyltransferase superfamily. PrmA family.

The protein resides in the cytoplasm. The catalysed reaction is L-lysyl-[protein] + 3 S-adenosyl-L-methionine = N(6),N(6),N(6)-trimethyl-L-lysyl-[protein] + 3 S-adenosyl-L-homocysteine + 3 H(+). In terms of biological role, methylates ribosomal protein L11. This Rhizobium etli (strain CIAT 652) protein is Ribosomal protein L11 methyltransferase.